The sequence spans 31 residues: Cytochrome b6-f complex subunit 6 (31 aa).

A helical transmembrane segment spans residues 3–23 (VFLGYIIFLAAFFGLATGLFL).

The protein belongs to the PetL family. In terms of assembly, the 4 large subunits of the cytochrome b6-f complex are cytochrome b6, subunit IV (17 kDa polypeptide, PetD), cytochrome f and the Rieske protein, while the 4 small subunits are PetG, PetL, PetM and PetN. The complex functions as a dimer.

It is found in the plastid. The protein resides in the chloroplast thylakoid membrane. Component of the cytochrome b6-f complex, which mediates electron transfer between photosystem II (PSII) and photosystem I (PSI), cyclic electron flow around PSI, and state transitions. PetL is important for photoautotrophic growth as well as for electron transfer efficiency and stability of the cytochrome b6-f complex. This chain is Cytochrome b6-f complex subunit 6, found in Pyropia yezoensis (Susabi-nori).